Reading from the N-terminus, the 203-residue chain is uncharacterized protein (203 aa).

This is an uncharacterized protein from Methanocaldococcus jannaschii (strain ATCC 43067 / DSM 2661 / JAL-1 / JCM 10045 / NBRC 100440) (Methanococcus jannaschii).